Here is a 358-residue protein sequence, read N- to C-terminus: uncharacterized protein (358 aa).

The span at 70-88 (RPAATAGTTPATGASGSAR) shows a compositional bias: low complexity. Positions 70-93 (RPAATAGTTPATGASGSARPTDAA) are disordered. Residues 178 to 353 (PSTCRGDNVS…AFSAAIQAGE (176 aa)) form the Macro domain.

This is an uncharacterized protein from Mycobacterium bovis (strain ATCC BAA-935 / AF2122/97).